We begin with the raw amino-acid sequence, 399 residues long: Argininosuccinate synthase (399 aa).

ATP is bound at residue 8 to 16; sequence AYSGGLDTS. Residue Tyr87 coordinates L-citrulline. Gly117 contacts ATP. L-aspartate contacts are provided by Thr119, Asn123, and Asp124. Residue Asn123 coordinates L-citrulline. L-citrulline contacts are provided by Arg127, Ser175, Glu260, and Tyr272.

It belongs to the argininosuccinate synthase family. Type 1 subfamily. Homotetramer.

It is found in the cytoplasm. The enzyme catalyses L-citrulline + L-aspartate + ATP = 2-(N(omega)-L-arginino)succinate + AMP + diphosphate + H(+). The protein operates within amino-acid biosynthesis; L-arginine biosynthesis; L-arginine from L-ornithine and carbamoyl phosphate: step 2/3. The protein is Argininosuccinate synthase of Mycolicibacterium smegmatis (strain ATCC 700084 / mc(2)155) (Mycobacterium smegmatis).